The sequence spans 262 residues: Snake venom serine proteinase 9 (262 aa).

The first 18 residues, 1–18, serve as a signal peptide directing secretion; that stretch reads MVLIRVLANLLILQLSYA. Residues 19–24 constitute a propeptide that is removed on maturation; sequence QKSSEL. The region spanning 25–253 is the Peptidase S1 domain; that stretch reads VIGGDECNID…HLDWIQSIIA (229 aa). 5 disulfides stabilise this stretch: Cys-31/Cys-165, Cys-52/Cys-68, Cys-144/Cys-214, Cys-176/Cys-193, and Cys-204/Cys-229. His-67 functions as the Charge relay system in the catalytic mechanism. An N-linked (GlcNAc...) asparagine glycan is attached at Asn-105. The Charge relay system role is filled by Asp-112. Catalysis depends on Ser-208, which acts as the Charge relay system.

Belongs to the peptidase S1 family. Snake venom subfamily. Monomer. In terms of tissue distribution, expressed by the venom gland.

It is found in the secreted. Snake venom serine protease that may act in the hemostasis system of the prey. The chain is Snake venom serine proteinase 9 from Crotalus adamanteus (Eastern diamondback rattlesnake).